A 248-amino-acid chain; its full sequence is PF03932 family protein CutC (248 aa).

This sequence belongs to the CutC family. In terms of assembly, homodimer.

The protein localises to the cytoplasm. The sequence is that of PF03932 family protein CutC from Escherichia coli O157:H7.